A 432-amino-acid polypeptide reads, in one-letter code: Probable imidazolonepropionase (432 aa).

4-imidazolone-5-propanoate is bound by residues Tyr159 and His192. Tyr159 is a binding site for N-formimidoyl-L-glutamate. His260 is a binding site for Fe(3+). Position 260 (His260) interacts with Zn(2+). Position 263 (Glu263) interacts with 4-imidazolone-5-propanoate. Residue Asp334 participates in Fe(3+) binding. Zn(2+) is bound at residue Asp334. N-formimidoyl-L-glutamate is bound at residue Asn336.

Belongs to the metallo-dependent hydrolases superfamily. HutI family. Zn(2+) is required as a cofactor. It depends on Fe(3+) as a cofactor.

The catalysed reaction is 4-imidazolone-5-propanoate + H2O = N-formimidoyl-L-glutamate. The protein operates within amino-acid degradation; L-histidine degradation into L-glutamate; N-formimidoyl-L-glutamate from L-histidine: step 3/3. This is Probable imidazolonepropionase (amdhd1) from Xenopus tropicalis (Western clawed frog).